Here is a 1178-residue protein sequence, read N- to C-terminus: DNA-directed RNA polymerase subunit beta' (1178 aa).

Zn(2+) contacts are provided by cysteine 60, cysteine 62, cysteine 75, and cysteine 78. Mg(2+) is bound by residues aspartate 450, aspartate 452, and aspartate 454. Residues cysteine 795, cysteine 869, cysteine 876, and cysteine 879 each contribute to the Zn(2+) site.

The protein belongs to the RNA polymerase beta' chain family. In terms of assembly, the RNAP catalytic core consists of 2 alpha, 1 beta, 1 beta' and 1 omega subunit. When a sigma factor is associated with the core the holoenzyme is formed, which can initiate transcription. Requires Mg(2+) as cofactor. Zn(2+) serves as cofactor.

It catalyses the reaction RNA(n) + a ribonucleoside 5'-triphosphate = RNA(n+1) + diphosphate. Functionally, DNA-dependent RNA polymerase catalyzes the transcription of DNA into RNA using the four ribonucleoside triphosphates as substrates. This Clostridium botulinum (strain Okra / Type B1) protein is DNA-directed RNA polymerase subunit beta'.